Reading from the N-terminus, the 120-residue chain is Flagellar protein FliT (120 aa).

Residues 1-50 form a required for homodimerization region; that stretch reads MERHQHLLSEYQQILTLSEQMLVLATEGNWDALVDLEMTYLKAVESTANI. Residues 60-98 are fliD binding; it reads LQDLLREKLRAILDNEIEIKRLLQLRLDRLSDLVGQSTK.

It belongs to the FliT family. Homodimer. Interacts with FliD and FlhC.

It localises to the cytoplasm. The protein localises to the cytosol. Its function is as follows. Dual-function protein that regulates the transcription of class 2 flagellar operons and that also acts as an export chaperone for the filament-capping protein FliD. As a transcriptional regulator, acts as an anti-FlhDC factor; it directly binds FlhC, thus inhibiting the binding of the FlhC/FlhD complex to class 2 promoters, resulting in decreased expression of class 2 flagellar operons. As a chaperone, effects FliD transition to the membrane by preventing its premature polymerization, and by directing it to the export apparatus. This Yersinia enterocolitica serotype O:8 / biotype 1B (strain NCTC 13174 / 8081) protein is Flagellar protein FliT.